Here is an 827-residue protein sequence, read N- to C-terminus: Glycerol-3-phosphate acyltransferase (827 aa).

The HXXXXD motif motif lies at 325-330; that stretch reads CHRSHM.

The protein belongs to the GPAT/DAPAT family.

Its subcellular location is the cell inner membrane. The enzyme catalyses sn-glycerol 3-phosphate + an acyl-CoA = a 1-acyl-sn-glycero-3-phosphate + CoA. Its pathway is phospholipid metabolism; CDP-diacylglycerol biosynthesis; CDP-diacylglycerol from sn-glycerol 3-phosphate: step 1/3. This Shigella sonnei (strain Ss046) protein is Glycerol-3-phosphate acyltransferase.